Here is a 347-residue protein sequence, read N- to C-terminus: tRNA N6-adenosine threonylcarbamoyltransferase (347 aa).

2 residues coordinate Fe cation: His-117 and His-121. Residues 140–144 (LVSGG), Asp-174, Gly-187, Asp-191, and Asn-281 contribute to the substrate site. Asp-309 contacts Fe cation.

The protein belongs to the KAE1 / TsaD family. The cofactor is Fe(2+).

The protein localises to the cytoplasm. The enzyme catalyses L-threonylcarbamoyladenylate + adenosine(37) in tRNA = N(6)-L-threonylcarbamoyladenosine(37) in tRNA + AMP + H(+). Its function is as follows. Required for the formation of a threonylcarbamoyl group on adenosine at position 37 (t(6)A37) in tRNAs that read codons beginning with adenine. Is involved in the transfer of the threonylcarbamoyl moiety of threonylcarbamoyl-AMP (TC-AMP) to the N6 group of A37, together with TsaE and TsaB. TsaD likely plays a direct catalytic role in this reaction. This is tRNA N6-adenosine threonylcarbamoyltransferase from Thermobifida fusca (strain YX).